A 241-amino-acid polypeptide reads, in one-letter code: MNPMGRKWANIVAKKTAKDGANSKIYAKFGVEIYVAAKQGEPDPESNSALKFVLERAKQAQVPKHVIDKAIDKAKGNTDETFVEGRYEGFGPNGSMIIVDTLTSNVNRTAANVRTAFGKNGGNMGASGSVSYMFDKKGVIVFAGEDADAIFEQLLEADVDVEDVEAEDGSITVYTEPTDLHKALEALRANGQEEFQVTELEMIPQTEVTLEGEDLETFKGLIDALEADDDVQKVYHNVADM.

It belongs to the TACO1 family. YeeN subfamily.

It localises to the cytoplasm. The sequence is that of Probable transcriptional regulatory protein str0195 from Streptococcus thermophilus (strain CNRZ 1066).